The chain runs to 2380 residues: Probable polyketide synthase 25 (2380 aa).

Positions 1–18 are enriched in polar residues; that stretch reads MDNSYLNNPQFDINNGNK. A disordered region spans residues 1–29; it reads MDNSYLNNPQFDINNGNKEVTDDDNNKNN. The 427-residue stretch at 31–457 folds into the Ketosynthase family 3 (KS3) domain; the sequence is DNLVAIVGVG…GSNCCLVLSQ (427 aa). Catalysis depends on for beta-ketoacyl synthase activity residues Cys-198, His-340, and His-380. Residues 649 to 682 are acyl/malonyl transferase; it reads GIKASFMLGHSLGEVTTAYCSGMIDIDQLCYLIY. Ser-659 (for acyl/malonyl transferase activity) is an active-site residue. The tract at residues 948–1070 is N-terminal hotdog fold; it reads ISILGNSMQD…ANFQLYNNGK (123 aa). Positions 948–1234 constitute a PKS/mFAS DH domain; the sequence is ISILGNSMQD…CTSLTPVKDP (287 aa). His-982 acts as the Proton acceptor; for dehydratase activity in catalysis. The interval 1085 to 1234 is C-terminal hotdog fold; the sequence is NLSSIPWDKF…CTSLTPVKDP (150 aa). Asp-1148 (proton donor; for dehydratase activity) is an active-site residue. The 78-residue stretch at 2299 to 2376 folds into the Carrier domain; the sequence is KNSTNIKDKF…MVCQIINDNF (78 aa). Ser-2336 is modified (O-(pantetheine 4'-phosphoryl)serine).

It depends on pantetheine 4'-phosphate as a cofactor.

Its function is as follows. Probable polyketide synthase. The chain is Probable polyketide synthase 25 (pks25) from Dictyostelium discoideum (Social amoeba).